A 591-amino-acid polypeptide reads, in one-letter code: CDK5RAP3 protein homolog (591 aa).

Over residues 232–250 (RAGAPSSAKGPASSASAPP) the composition is skewed to low complexity. 2 disordered regions span residues 232–252 (RAGA…PPAL) and 269–303 (TAPP…DAGG). Positions 279–303 (AGAGASGQGGGIEIDWGDSGGDAGG) are enriched in gly residues. 3 short sequence motifs (shuffled ATG8-binding motif) span residues 311–314 (IDWD), 334–337 (INWD), and 369–372 (IDWD). The segment covering 386–401 (NNRAGDVAEGEAAASL) has biased composition (low complexity). Residues 386 to 416 (NNRAGDVAEGEAAASLSGGGGGGASSGDPDD) form a disordered region.

It belongs to the CDK5RAP3 family. In terms of assembly, substrate adapter component of the UFM1 ribosome E3 ligase (UREL) complex. Interacts with ATG8 family proteins.

Functionally, substrate adapter of E3 ligase complexes mediating ufmylation, the covalent attachment of the ubiquitin-like modifier UFM1 to substrate proteins, and which is involved in various processes, such as ribosome recycling and reticulophagy (also called ER-phagy). This Chlamydomonas reinhardtii (Chlamydomonas smithii) protein is CDK5RAP3 protein homolog.